A 563-amino-acid chain; its full sequence is DNA repair protein rhp7 (563 aa).

Residues Met1–Asp101 form a disordered region. The span at Glu39–Glu59 shows a compositional bias: polar residues. Basic residues predominate over residues Val78–Lys90.

This sequence belongs to the RAD7 family.

It is found in the nucleus. Its function is as follows. Involved in global genome repair (GGR) via nucleotide excision repair (NER), in conjunction with rhp16, after UV irradiation. In Schizosaccharomyces pombe (strain 972 / ATCC 24843) (Fission yeast), this protein is DNA repair protein rhp7 (rhp7).